Consider the following 340-residue polypeptide: Guanine nucleotide-binding protein G(I)/G(S)/G(T) subunit beta-3 (340 aa).

WD repeat units follow at residues 53–83, 95–125, 141–170, 182–212, 224–254, 268–298, and 310–340; these read GHLA…IVWD, LRSS…SIYS, AHTG…ALWD, GHTG…KLWD, GHES…RLFD, SIIC…NIWD, and GHDN…KVWN.

It belongs to the WD repeat G protein beta family. In terms of assembly, g proteins are composed of 3 units, alpha, beta and gamma. Interacts with RASD2.

The protein resides in the cytoplasm. The protein localises to the perinuclear region. Its function is as follows. Guanine nucleotide-binding proteins (G proteins) are involved as a modulator or transducer in various transmembrane signaling systems. The beta and gamma chains are required for the GTPase activity, for replacement of GDP by GTP, and for G protein-effector interaction. The chain is Guanine nucleotide-binding protein G(I)/G(S)/G(T) subunit beta-3 (GNB3) from Canis lupus familiaris (Dog).